A 94-amino-acid chain; its full sequence is Elongation factor 1-beta (94 aa).

This sequence belongs to the EF-1-beta/EF-1-delta family.

Functionally, promotes the exchange of GDP for GTP in EF-1-alpha/GDP, thus allowing the regeneration of EF-1-alpha/GTP that could then be used to form the ternary complex EF-1-alpha/GTP/AAtRNA. This Ignicoccus hospitalis (strain KIN4/I / DSM 18386 / JCM 14125) protein is Elongation factor 1-beta.